The primary structure comprises 268 residues: uncharacterized protein (268 aa).

This is an uncharacterized protein from Metamycoplasma hominis (strain ATCC 23114 / DSM 25592 / NBRC 14850 / NCTC 10111 / PG21) (Mycoplasma hominis).